A 2352-amino-acid chain; its full sequence is Highly reducing polyketide synthase ZEA2 (2352 aa).

Residues 9–433 enclose the Ketosynthase family 3 (KS3) domain; the sequence is PGPVAIVGLA…GTNGHVVLEA (425 aa). Catalysis depends on for beta-ketoacyl synthase activity residues C181, H316, and H356. The interval 544–875 is malonyl-CoA:ACP transacylase (MAT) domain; sequence FVFTGQGAQW…LATSLFLQGV (332 aa). Catalysis depends on S634, which acts as the For malonyltransferase activity. The N-terminal hotdog fold stretch occupies residues 923 to 1058; the sequence is RSIIGAPVPK…GLITIDYEGN (136 aa). The PKS/mFAS DH domain occupies 923–1242; that stretch reads RSIIGAPVPK…TSELEMDGAA (320 aa). The tract at residues 925–1237 is dehydratase (DH) domain; that stretch reads IIGAPVPKMN…VIDFRTSELE (313 aa). H955 serves as the catalytic Proton acceptor; for dehydratase activity. Residues 1086–1242 form a C-terminal hotdog fold region; the sequence is PATYAKDRFY…TSELEMDGAA (157 aa). Catalysis depends on D1152, which acts as the Proton donor; for dehydratase activity. The tract at residues 1643 to 1955 is enoylreductase (ER) domain; it reads GLLDTLYFVD…QGKHRGKIVL (313 aa). The tract at residues 1979-2159 is catalytic ketoreductase (KRc) domain; it reads ATYLFVGGLG…VSVNLGIMRD (181 aa). Residues 2269–2346 enclose the Carrier domain; the sequence is KATEIITNAL…SFAGKLASTS (78 aa). Position 2306 is an O-(pantetheine 4'-phosphoryl)serine (S2306).

It participates in mycotoxin biosynthesis. Its function is as follows. Highly reducing polyketide synthase; part of the gene cluster that mediates the biosynthesis of zearalenone (ZEA), a nonsteroid estrogen that is a contaminant of cereal grains and causes estrogenic disorders in humans and animals. The ZEA backbone is synthesized from a single acetyl-CoA molecule and eight malonyl-CoA molecules. The reducing polyketide synthase ZEA2 is proposed to synthesize a reduced hexaketide intermediate by using different combinations of its reductive domains during each round of condensation. The hexaketide thioester is then transacylated to the non-reducing polyketide synthase ZEA1 and is further condensed with three malonyl-CoAs without reductive tailoring to yield a mixed reduced/unreduced nonaketide. ZEA1 must be able to interact with ZEA2 to facilitate starter-unit acyltransfer and initiate polyketide biosynthesis. ZEA1 also mediates the required C2-C7 cyclization to form the resorcylate core and catalyzes the formation of the macrolactone. ZEB1 is then responsible for the chemical conversion of beta-zearalenonol (beta-ZOL) to ZEA in the biosynthetic pathway. In Gibberella zeae (strain ATCC MYA-4620 / CBS 123657 / FGSC 9075 / NRRL 31084 / PH-1) (Wheat head blight fungus), this protein is Highly reducing polyketide synthase ZEA2.